The chain runs to 131 residues: Glycine cleavage system H protein (131 aa).

One can recognise a Lipoyl-binding domain in the interval 24 to 106; sequence RVTVGISDHA…YGEGWIFVVE (83 aa). Position 65 is an N6-lipoyllysine (Lys65).

The protein belongs to the GcvH family. As to quaternary structure, the glycine cleavage system is composed of four proteins: P, T, L and H. It depends on (R)-lipoate as a cofactor.

In terms of biological role, the glycine cleavage system catalyzes the degradation of glycine. The H protein shuttles the methylamine group of glycine from the P protein to the T protein. This is Glycine cleavage system H protein from Xanthomonas campestris pv. campestris (strain 8004).